Here is a 60-residue protein sequence, read N- to C-terminus: UPF0434 protein CKO_02153 (60 aa).

This sequence belongs to the UPF0434 family.

In Citrobacter koseri (strain ATCC BAA-895 / CDC 4225-83 / SGSC4696), this protein is UPF0434 protein CKO_02153.